The chain runs to 146 residues: uncharacterized protein (146 aa).

This is an uncharacterized protein from Methanothermobacter thermautotrophicus (Methanobacterium thermoformicicum).